A 1401-amino-acid polypeptide reads, in one-letter code: DNA-directed RNA polymerase subunit beta (1401 aa).

It belongs to the RNA polymerase beta chain family. The RNAP catalytic core consists of 2 alpha, 1 beta, 1 beta' and 1 omega subunit. When a sigma factor is associated with the core the holoenzyme is formed, which can initiate transcription.

It carries out the reaction RNA(n) + a ribonucleoside 5'-triphosphate = RNA(n+1) + diphosphate. Its function is as follows. DNA-dependent RNA polymerase catalyzes the transcription of DNA into RNA using the four ribonucleoside triphosphates as substrates. This Desulforapulum autotrophicum (strain ATCC 43914 / DSM 3382 / VKM B-1955 / HRM2) (Desulfobacterium autotrophicum) protein is DNA-directed RNA polymerase subunit beta.